The primary structure comprises 325 residues: Putative gluconeogenesis factor (325 aa).

The protein belongs to the gluconeogenesis factor family.

The protein resides in the cytoplasm. Required for morphogenesis under gluconeogenic growth conditions. The chain is Putative gluconeogenesis factor from Streptococcus pneumoniae serotype 4 (strain ATCC BAA-334 / TIGR4).